The chain runs to 236 residues: Purine nucleoside phosphorylase DeoD-type (236 aa).

Residue His-4 coordinates a purine D-ribonucleoside. Residues Gly-20, Arg-24, Arg-43, and 87–90 (RVGT) contribute to the phosphate site. Residues 178-180 (EME) and 202-203 (SD) contribute to the a purine D-ribonucleoside site. Asp-203 acts as the Proton donor in catalysis.

Belongs to the PNP/UDP phosphorylase family. In terms of assembly, homohexamer; trimer of homodimers.

It catalyses the reaction a purine D-ribonucleoside + phosphate = a purine nucleobase + alpha-D-ribose 1-phosphate. The catalysed reaction is a purine 2'-deoxy-D-ribonucleoside + phosphate = a purine nucleobase + 2-deoxy-alpha-D-ribose 1-phosphate. Functionally, catalyzes the reversible phosphorolytic breakdown of the N-glycosidic bond in the beta-(deoxy)ribonucleoside molecules, with the formation of the corresponding free purine bases and pentose-1-phosphate. The chain is Purine nucleoside phosphorylase DeoD-type from Geobacillus kaustophilus (strain HTA426).